Reading from the N-terminus, the 397-residue chain is Enoyl-[acyl-carrier-protein] reductase [NADH] (397 aa).

NAD(+) contacts are provided by residues 48–53 (GASTGY), 74–75 (LE), 111–112 (DA), and 139–140 (LA). Position 225 (Tyr-225) interacts with substrate. The Proton donor role is filled by Tyr-235. NAD(+) contacts are provided by residues Lys-244 and 273–275 (VVT).

It belongs to the TER reductase family. Monomer.

The enzyme catalyses a 2,3-saturated acyl-[ACP] + NAD(+) = a (2E)-enoyl-[ACP] + NADH + H(+). It functions in the pathway lipid metabolism; fatty acid biosynthesis. Functionally, involved in the final reduction of the elongation cycle of fatty acid synthesis (FAS II). Catalyzes the reduction of a carbon-carbon double bond in an enoyl moiety that is covalently linked to an acyl carrier protein (ACP). In Tolumonas auensis (strain DSM 9187 / NBRC 110442 / TA 4), this protein is Enoyl-[acyl-carrier-protein] reductase [NADH].